Here is a 78-residue protein sequence, read N- to C-terminus: Large ribosomal subunit protein eL20 (78 aa).

It belongs to the eukaryotic ribosomal protein eL20 family. In terms of assembly, part of the 50S ribosomal subunit. Binds 23S rRNA.

In Pyrobaculum calidifontis (strain DSM 21063 / JCM 11548 / VA1), this protein is Large ribosomal subunit protein eL20.